The primary structure comprises 369 residues: UPF0754 membrane protein Aflv_2299 (369 aa).

2 helical membrane-spanning segments follow: residues 1 to 21 (MGLF…GGMT) and 347 to 367 (YLGA…TFFV).

Belongs to the UPF0754 family.

It localises to the cell membrane. The sequence is that of UPF0754 membrane protein Aflv_2299 from Anoxybacillus flavithermus (strain DSM 21510 / WK1).